A 360-amino-acid chain; its full sequence is ASTRA-associated protein 1 (360 aa).

WD repeat units lie at residues 9-46, 49-86, 167-205, and 317-357; these read AHAAPVSGFCPWENQLVSADRSGTLIVWNLSTRRPAAR, AHEGQVLSMQPTRFGLLTHGRDSAVRIWPPGAAENSKG, RGEGIIMRLAWAAPDLLYVGYESGALASFSLSPEGCRML, and PEQS…ENGL.

Belongs to the WD repeat ASA1 family. In terms of assembly, component of the ASTRA chromatin remodeling machinery complex.

It localises to the nucleus. Its function is as follows. Component of the ASTRA complex involved in chromatin remodeling. The chain is ASTRA-associated protein 1 (ASA1) from Clavispora lusitaniae (strain ATCC 42720) (Yeast).